We begin with the raw amino-acid sequence, 87 residues long: Small ribosomal subunit protein uS15c (87 aa).

It belongs to the universal ribosomal protein uS15 family. Part of the 30S ribosomal subunit.

It is found in the plastid. The protein localises to the chloroplast. The protein is Small ribosomal subunit protein uS15c (rps15) of Amborella trichopoda.